The primary structure comprises 384 residues: MSKFPEKGLPREEVLNLLEDKTKVDLTFSSGKILGSMCTMPHELAIEVFARYIDRNLGDPGLHPGTRKIEEEVIEMLSDLLHLEKGYGHIVSGGTEANILAVRAFRNISDAERPELILPKSAHFSFIKAGEMLGVKLVWAELKQDYAVDVKDVEAKISDNTIGIVGIAGTTGLGVVDDIPALSDLAREYGIPLHVDAAFGGFVIPFAKSLGYDLPDFDFKLKGVESITIDPHKMGMAPIPAGGIIFRRKKYLKAISVLAPYLAGGKVWQATITGTRPGASVLAVWALIKHLGFEGYREIVRKAMELSRWFAEEIKKLNNAWLVREPMLNIVSFQTKNLRKVERELKRRGWGISAHRGYIRIVFMPHVTKEMVEEFLRDLREVLK.

K233 is subject to N6-(pyridoxal phosphate)lysine.

Belongs to the group II decarboxylase family. MfnA subfamily. Pyridoxal 5'-phosphate is required as a cofactor.

It catalyses the reaction L-aspartate + H(+) = beta-alanine + CO2. It functions in the pathway cofactor biosynthesis; coenzyme A biosynthesis. Functionally, catalyzes the decarboxylation of L-aspartate to produce beta-alanine. In Pyrococcus abyssi (strain GE5 / Orsay), this protein is Probable L-aspartate decarboxylase.